The primary structure comprises 491 residues: MISKQEYQAQAAQGYNRIPLVQELLADLDTPLSLYLKLANRPYTYLLESVVGGERFGRYSFIGLPCSHYLKASGKHVDVYQNGEIVEQHDGNPLPFIEAFHNRFKTPEIPSLPRFTGGLVGYFGYETIYNFEHFAHRLKNTTKADPLGTPDILLMLSQELAVIDNLSGKIHLVVYADPSQPDGYERARERLEDIRTQLRQSCAIPLSLGSKHTEAVSEFGEEPFKACVNKIKDYIFAGDCMQVVPSQRMSMEFTDSPLALYRALRTLNPSPYLFYYDFGDFHIVGSSPEILVRRERDDVIVRPIAGTRLRGKTPAEDLANEQDLLSDAKEIAEHVMLIDLGRNDVGRISKTGEVKVTDKMVIEKYSHVMHIVSNVEGRLKDGMTNMDILAATFPAGTLSGAPKVRAMEIIEEVEPSKRGIYGGAVGVWGFNNDMDLAIAIRTAVVKNNTLYVQSGAGVVADSDPASEWQETQNKARAVIRAAQMVQEGLDK.

Residues Ser-49 and 271–273 (PYL) each bind L-tryptophan. Residue 306 to 307 (GT) participates in chorismate binding. Residue Glu-333 coordinates Mg(2+). Residues Tyr-421, Arg-441, 455–457 (GAG), and Gly-457 each bind chorismate. Mg(2+) is bound at residue Glu-470.

The protein belongs to the anthranilate synthase component I family. Heterotetramer consisting of two non-identical subunits: a beta subunit (TrpG) and a large alpha subunit (TrpE). Mg(2+) is required as a cofactor.

It catalyses the reaction chorismate + L-glutamine = anthranilate + pyruvate + L-glutamate + H(+). It participates in amino-acid biosynthesis; L-tryptophan biosynthesis; L-tryptophan from chorismate: step 1/5. Feedback inhibited by tryptophan. Part of a heterotetrameric complex that catalyzes the two-step biosynthesis of anthranilate, an intermediate in the biosynthesis of L-tryptophan. In the first step, the glutamine-binding beta subunit (TrpG) of anthranilate synthase (AS) provides the glutamine amidotransferase activity which generates ammonia as a substrate that, along with chorismate, is used in the second step, catalyzed by the large alpha subunit of AS (TrpE) to produce anthranilate. In the absence of TrpG, TrpE can synthesize anthranilate directly from chorismate and high concentrations of ammonia. The chain is Anthranilate synthase component 1 (trpE) from Neisseria meningitidis serogroup A / serotype 4A (strain DSM 15465 / Z2491).